The primary structure comprises 179 residues: Macro domain-containing protein XCC3184 (179 aa).

In terms of domain architecture, Macro spans 1-175 (MRIEVWQGDI…AYHQALATQE (175 aa)).

This sequence belongs to the MacroD-type family.

In Xanthomonas campestris pv. campestris (strain ATCC 33913 / DSM 3586 / NCPPB 528 / LMG 568 / P 25), this protein is Macro domain-containing protein XCC3184.